A 391-amino-acid polypeptide reads, in one-letter code: Superoxide dismutase [Fe] 1, chloroplastic (391 aa).

A chloroplast-targeting transit peptide spans 1 to 73 (MAFATLVGVG…GESTNSRVLQ (73 aa)). The span at 87 to 119 (VNDGIDDETASDAEMDEDAEANGDESSGTDEDA) shows a compositional bias: acidic residues. A disordered region spans residues 87-120 (VNDGIDDETASDAEMDEDAEANGDESSGTDEDAS). 4 residues coordinate Fe cation: histidine 148, histidine 202, aspartate 301, and histidine 305. The segment at 370-391 (MPQQVNGDAREQTSGQEKSLGV) is disordered. Polar residues predominate over residues 381–391 (QTSGQEKSLGV).

The protein belongs to the iron/manganese superoxide dismutase family. As to quaternary structure, homodimer. Fe cation serves as cofactor.

Its subcellular location is the plastid. It localises to the chloroplast. The enzyme catalyses 2 superoxide + 2 H(+) = H2O2 + O2. Functionally, destroys superoxide anion radicals which are normally produced within the cells and which are toxic to biological systems. This chain is Superoxide dismutase [Fe] 1, chloroplastic, found in Oryza sativa subsp. japonica (Rice).